The following is a 285-amino-acid chain: Purine biosynthesis transcriptional repressor PurR (285 aa).

Residues M1–P73 form a DNA binding domain region. Residues K74–S285 form an effector binding domain region. Y102 lines the guanosine 3',5'-bis(diphosphate) pocket. A138, T139, K140, and R160 together coordinate 5-phospho-alpha-D-ribose 1-diphosphate. The guanosine 3',5'-bis(diphosphate) site is built by G178 and S179. The 5-phospho-alpha-D-ribose 1-diphosphate site is built by D203, D204, F205, K207, and A208. K207 serves as a coordination point for guanosine 3',5'-bis(diphosphate). Guanosine 3',5'-bis(diphosphate) is bound by residues G209, G210, and T211. Position 211 (T211) interacts with 5-phospho-alpha-D-ribose 1-diphosphate.

The protein belongs to the purine/pyrimidine phosphoribosyltransferase family. PurR subfamily. As to quaternary structure, homodimer.

Its activity is regulated as follows. The binding of PurR to DNA, and therefore the repressor activity, is influenced by interaction with the effector molecules 5-phosphoribosyl 1-pyrophosphate (PRPP) and (p)ppGpp. PRPP binds to PurR and reduces affinity of PurR for DNA, which inhibits the repressor activity and induces transcription of the target genes. On the contrary, (p)ppGpp enhances binding of PurR to DNA and repression of the transcription. PRPP and (p)ppGpp compete for PurR binding and allosteric control of transcription. ppGpp maintains PurR-DNA interaction and prevents PRPP from de-repressing PurR regulation during conditions that lead to (p)ppGpp induction, such as upon amino acid starvation. In terms of biological role, DNA-binding transcriptional repressor that controls the expression of a number of genes involved in the synthesis, metabolism and transport of purines. In response to a signal of excess adenine, represses the transcription of the pur operon, which encodes enzymes of the purine biosynthetic pathway. It also represses the expression of the purA and purR genes. In addition, controls the expression of several other genes or operons, which encode enzymes or transporters playing a role in purine nucleotide metabolism. Acts by binding directly to specific DNA sequences, named PurBoxes, in the upstream control regions of affected genes. Two PurBoxes are required for high-affinity PurR binding. Also responds to amino acid starvation via (p)ppGpp, which strongly increases PurR activity and repression of purine nucleotide biosynthesis genes. This chain is Purine biosynthesis transcriptional repressor PurR, found in Bacillus subtilis (strain 168).